A 1480-amino-acid chain; its full sequence is ABC transporter G family member 49 (1480 aa).

A compositionally biased stretch (polar residues) spans 1 to 18 (MHTTTQATPQKSMVMTTT). 3 disordered regions span residues 1 to 42 (MHTT…AGSS), 60 to 81 (VSGE…EDDE), and 104 to 124 (SSTR…GGAA). Composition is skewed to gly residues over residues 63–73 (ELGGGGGGGGG) and 107–123 (RGGG…GGGA). The region spanning 212-485 (LAAKLGFSHH…FESCGFKCPE (274 aa)) is the ABC transporter 1 domain. ATP is bound at residue 245–252 (GPPGCGKT). The ABC transmembrane type-2 1 domain occupies 563–775 (HLLKACFDRE…AEIGLTGNEF (213 aa)). 6 helical membrane passes run 581 to 601 (FLHI…GTVF), 619 to 639 (SLFY…VMSI), 656 to 676 (GWAY…VAAL), 699 to 719 (LLVL…VGSY), 725 to 745 (VGPI…GFLI), and 811 to 831 (VAAL…GLTI). One can recognise an ABC transporter 2 domain in the interval 877-1129 (ISFQDVNYYV…KVIQYFQSIP (253 aa)). 922 to 929 (GVTGAGKT) provides a ligand contact to ATP. The region spanning 1202–1418 (EQFKACLWKQ…TLNLLFTTQF (217 aa)) is the ABC transmembrane type-2 2 domain. 7 helical membrane passes run 1226-1246 (IVFM…QGNI), 1254-1274 (GLFT…INNS), 1311-1331 (IPYV…TIGY), 1340-1360 (WFFY…MLIV), 1368-1388 (VASI…GFVM), 1396-1416 (WWIW…LFTT), and 1449-1469 (LLPL…ILYG).

It belongs to the ABC transporter superfamily. ABCG family. PDR (TC 3.A.1.205) subfamily.

It localises to the membrane. Functionally, may be a general defense protein. The chain is ABC transporter G family member 49 from Oryza sativa subsp. japonica (Rice).